A 430-amino-acid chain; its full sequence is Zinc finger CCCH domain-containing protein 48 (430 aa).

2 disordered regions span residues 1 to 27 (MDLDMNGGNKRVFQRLGGGSNRPTTDS) and 56 to 90 (GSGPVAASSNKRVADESGFAGPSHRRGPGFSGTAN). The segment at 26–52 (DSNQKVCFHWRAGRCNRYPCPYLHREL) adopts a C3H1-type 1 zinc-finger fold. The C3H1-type 2 zinc finger occupies 102–129 (TKTEKLCKFWVDGNCPYGDKCRYLHCWS). 6 WD repeats span residues 142–183 (GHQK…GVLN), 221–258 (GPVGQVYSLVVGTDLLFAGTQDGSILVWRYNSTTSCFD), 265–304 (GHTLAVVSLYVGANRLYSGAMDNSIKVWSLDNLQCIQTLT), 306–342 (HTSVVMSLICWDQFLLSCSLDNTVKIWAATEGGNLEV), 345–389 (THKE…ERGK), and 391–429 (LAKQEIRSIQIGPGGIFFTGDGSGQVKVWKWSTESTPIL).

The polypeptide is Zinc finger CCCH domain-containing protein 48 (ZFWD1) (Arabidopsis thaliana (Mouse-ear cress)).